The chain runs to 248 residues: Putative imidazole glycerol phosphate synthase subunit hisF2 (248 aa).

Asp129 is an active-site residue.

Belongs to the HisA/HisF family. Heterodimer of HisH and HisF.

The protein resides in the cytoplasm. It catalyses the reaction 5-[(5-phospho-1-deoxy-D-ribulos-1-ylimino)methylamino]-1-(5-phospho-beta-D-ribosyl)imidazole-4-carboxamide + L-glutamine = D-erythro-1-(imidazol-4-yl)glycerol 3-phosphate + 5-amino-1-(5-phospho-beta-D-ribosyl)imidazole-4-carboxamide + L-glutamate + H(+). It participates in amino-acid biosynthesis; L-histidine biosynthesis; L-histidine from 5-phospho-alpha-D-ribose 1-diphosphate: step 5/9. Its function is as follows. IGPS catalyzes the conversion of PRFAR and glutamine to IGP, AICAR and glutamate. The HisF subunit catalyzes the cyclization activity that produces IGP and AICAR from PRFAR using the ammonia provided by the HisH subunit. The protein is Putative imidazole glycerol phosphate synthase subunit hisF2 (hisF2) of Campylobacter jejuni subsp. jejuni serotype O:2 (strain ATCC 700819 / NCTC 11168).